We begin with the raw amino-acid sequence, 418 residues long: tRNA-2-methylthio-N(6)-dimethylallyladenosine synthase (418 aa).

The 117-residue stretch at 2 to 118 folds into the MTTase N-terminal domain; it reads PGYYLWTIGC…WREIPEGFIL (117 aa). Positions 11, 47, 81, 134, 138, and 141 each coordinate [4Fe-4S] cluster. The Radical SAM core domain maps to 120–351; the sequence is LRPPVSANVT…EDLQKETVGK (232 aa). A TRAM domain is found at 346-414; it reads KETVGKANAA…PWSLQAKLVN (69 aa).

The protein belongs to the methylthiotransferase family. MiaB subfamily. Monomer. [4Fe-4S] cluster serves as cofactor.

Its subcellular location is the cytoplasm. It carries out the reaction N(6)-dimethylallyladenosine(37) in tRNA + (sulfur carrier)-SH + AH2 + 2 S-adenosyl-L-methionine = 2-methylsulfanyl-N(6)-dimethylallyladenosine(37) in tRNA + (sulfur carrier)-H + 5'-deoxyadenosine + L-methionine + A + S-adenosyl-L-homocysteine + 2 H(+). In terms of biological role, catalyzes the methylthiolation of N6-(dimethylallyl)adenosine (i(6)A), leading to the formation of 2-methylthio-N6-(dimethylallyl)adenosine (ms(2)i(6)A) at position 37 in tRNAs that read codons beginning with uridine. The protein is tRNA-2-methylthio-N(6)-dimethylallyladenosine synthase of Dehalococcoides mccartyi (strain CBDB1).